The primary structure comprises 231 residues: Large ribosomal subunit protein uL1 (231 aa).

It belongs to the universal ribosomal protein uL1 family. In terms of assembly, part of the 50S ribosomal subunit.

In terms of biological role, binds directly to 23S rRNA. The L1 stalk is quite mobile in the ribosome, and is involved in E site tRNA release. Its function is as follows. Protein L1 is also a translational repressor protein, it controls the translation of the L11 operon by binding to its mRNA. This chain is Large ribosomal subunit protein uL1, found in Shouchella clausii (strain KSM-K16) (Alkalihalobacillus clausii).